The chain runs to 270 residues: Non-homologous end joining protein Ku (270 aa).

The 185-residue stretch at 10–194 (SLGLLNIGIK…NYPIQKQELT (185 aa)) folds into the Ku domain.

It belongs to the prokaryotic Ku family. In terms of assembly, homodimer. Interacts with LigD.

With LigD forms a non-homologous end joining (NHEJ) DNA repair enzyme, which repairs dsDNA breaks with reduced fidelity. Binds linear dsDNA with 5'- and 3'- overhangs but not closed circular dsDNA nor ssDNA. Recruits and stimulates the ligase activity of LigD. The sequence is that of Non-homologous end joining protein Ku from Bacillus thuringiensis subsp. konkukian (strain 97-27).